Reading from the N-terminus, the 275-residue chain is Octanoyl-[GcvH]:protein N-octanoyltransferase (275 aa).

The region spanning Gly42–Glu246 is the BPL/LPL catalytic domain. Catalysis depends on Cys145, which acts as the Acyl-thioester intermediate.

Belongs to the octanoyltransferase LipL family.

It carries out the reaction N(6)-octanoyl-L-lysyl-[glycine-cleavage complex H protein] + L-lysyl-[lipoyl-carrier protein] = N(6)-octanoyl-L-lysyl-[lipoyl-carrier protein] + L-lysyl-[glycine-cleavage complex H protein]. The protein operates within protein modification; protein lipoylation via endogenous pathway; protein N(6)-(lipoyl)lysine from octanoyl-[acyl-carrier-protein]. Catalyzes the amidotransfer (transamidation) of the octanoyl moiety from octanoyl-GcvH to the lipoyl domain of the E2 subunit of lipoate-dependent enzymes. The protein is Octanoyl-[GcvH]:protein N-octanoyltransferase of Anoxybacillus flavithermus (strain DSM 21510 / WK1).